The primary structure comprises 643 residues: Long-chain fatty acid transport protein 4 (643 aa).

2 helical membrane passes run 20-42 (LPWT…WRFI) and 139-156 (FVGL…AALI). Residue 243–254 (YIYTSGTTGLPK) coordinates AMP.

This sequence belongs to the ATP-dependent AMP-binding enzyme family.

The protein localises to the endoplasmic reticulum membrane. It catalyses the reaction a fatty acid(in) = a fatty acid(out). It carries out the reaction (9Z,12Z)-octadecadienoate(out) = (9Z,12Z)-octadecadienoate(in). The enzyme catalyses (9Z)-octadecenoate(out) = (9Z)-octadecenoate(in). The catalysed reaction is hexadecanoate(out) = hexadecanoate(in). It catalyses the reaction a long-chain fatty acid + ATP + CoA = a long-chain fatty acyl-CoA + AMP + diphosphate. It carries out the reaction (5Z,8Z,11Z,14Z)-eicosatetraenoate + ATP + CoA = (5Z,8Z,11Z,14Z)-eicosatetraenoyl-CoA + AMP + diphosphate. The enzyme catalyses (9Z)-octadecenoate + ATP + CoA = (9Z)-octadecenoyl-CoA + AMP + diphosphate. The catalysed reaction is hexadecanoate + ATP + CoA = hexadecanoyl-CoA + AMP + diphosphate. It catalyses the reaction (E)-hexadec-2-enoate + ATP + CoA = (2E)-hexadecenoyl-CoA + AMP + diphosphate. It carries out the reaction a very long-chain fatty acid + ATP + CoA = a very long-chain fatty acyl-CoA + AMP + diphosphate. The enzyme catalyses tetracosanoate + ATP + CoA = tetracosanoyl-CoA + AMP + diphosphate. In terms of biological role, mediates the import of long-chain fatty acids (LCFA) into the cell by facilitating their transport across cell membranes. Appears to be the principal fatty acid transporter in small intestinal enterocytes. Also functions as an acyl-CoA ligase catalyzing the ATP-dependent formation of fatty acyl-CoA using LCFA and very-long-chain fatty acids (VLCFA) as substrates, which prevents fatty acid efflux from cells and might drive more fatty acid uptake. Plays a role in the formation of the epidermal barrier. Required for fat absorption in early embryogenesis. Probably involved in fatty acid transport across the blood barrier. Indirectly inhibits RPE65 via substrate competition and via production of VLCFA derivatives like lignoceroyl-CoA. Prevents light-induced degeneration of rods and cones. This Pongo abelii (Sumatran orangutan) protein is Long-chain fatty acid transport protein 4 (SLC27A4).